The primary structure comprises 665 residues: Fermitin family homolog 3 (665 aa).

At Y11 the chain carries Phosphotyrosine. Positions 229–556 constitute an FERM domain; the sequence is WLDSSRCLMQ…SLPDFGISYV (328 aa). In terms of domain architecture, PH spans 354 to 453; the sequence is DHLRIFRPRK…WMAGCRLASK (100 aa). Residue Y502 is modified to Phosphotyrosine. T589 is modified (phosphothreonine).

It belongs to the kindlin family. In terms of assembly, interacts with ITGB1, ITGB2 and ITGB3 (via cytoplasmic tails).

It localises to the cell projection. The protein localises to the podosome. Its function is as follows. Plays a central role in cell adhesion in hematopoietic cells. Acts by activating the integrin beta-1-3 (ITGB1, ITGB2 and ITGB3). Required for integrin-mediated platelet adhesion and leukocyte adhesion to endothelial cells. Required for activation of integrin beta-2 (ITGB2) in polymorphonuclear granulocytes (PMNs). The protein is Fermitin family homolog 3 (FERMT3) of Bos taurus (Bovine).